Consider the following 230-residue polypeptide: Geranylgeranylglyceryl phosphate synthase (230 aa).

K13 is a binding site for sn-glycerol 1-phosphate. The Mg(2+) site is built by D15 and T41. Sn-glycerol 1-phosphate-binding positions include 161–166 (YIEYSG), G191, and 211–212 (GN).

The protein belongs to the GGGP/HepGP synthase family. Group I subfamily. Mg(2+) is required as a cofactor.

The protein resides in the cytoplasm. The enzyme catalyses sn-glycerol 1-phosphate + (2E,6E,10E)-geranylgeranyl diphosphate = sn-3-O-(geranylgeranyl)glycerol 1-phosphate + diphosphate. The protein operates within membrane lipid metabolism; glycerophospholipid metabolism. Functionally, prenyltransferase that catalyzes the transfer of the geranylgeranyl moiety of geranylgeranyl diphosphate (GGPP) to the C3 hydroxyl of sn-glycerol-1-phosphate (G1P). This reaction is the first ether-bond-formation step in the biosynthesis of archaeal membrane lipids. This is Geranylgeranylglyceryl phosphate synthase from Methanoculleus marisnigri (strain ATCC 35101 / DSM 1498 / JR1).